The sequence spans 84 residues: MSILSFLLGEKKKSASIAKERLQLIIAHERVGGKAPADYLPALQRELVAVISKYVKISDDDIRVNLERHDDLEVLEVKIEIPQV.

It belongs to the MinE family.

Its function is as follows. Prevents the cell division inhibition by proteins MinC and MinD at internal division sites while permitting inhibition at polar sites. This ensures cell division at the proper site by restricting the formation of a division septum at the midpoint of the long axis of the cell. This chain is Cell division topological specificity factor, found in Paraburkholderia phymatum (strain DSM 17167 / CIP 108236 / LMG 21445 / STM815) (Burkholderia phymatum).